The sequence spans 206 residues: Small ribosomal subunit protein uS4c (206 aa).

An S4 RNA-binding domain is found at 93–161 (MRLDNIVYRL…IEKNIELLDK (69 aa)).

The protein belongs to the universal ribosomal protein uS4 family. In terms of assembly, part of the 30S ribosomal subunit. Contacts protein S5. The interaction surface between S4 and S5 is involved in control of translational fidelity.

It localises to the plastid. In terms of biological role, one of the primary rRNA binding proteins, it binds directly to 16S rRNA where it nucleates assembly of the body of the 30S subunit. With S5 and S12 plays an important role in translational accuracy. The protein is Small ribosomal subunit protein uS4c (rps4) of Euglena longa (Euglenophycean alga).